A 93-amino-acid polypeptide reads, in one-letter code: Alpha-conotoxin RVIIIA (93 aa).

The first 20 residues, 1-20, serve as a signal peptide directing secretion; sequence MMSKMGAMFVLLLLFTLASS. The propeptide occupies 21 to 46; sequence QQEGDVQARKTHPKREFQRILLRSGR. A 4-carboxyglutamate mark is found at Glu63 and Glu68.

In terms of processing, contains 5 disulfide bonds. As to expression, expressed by the venom duct.

It localises to the secreted. Its function is as follows. Alpha-conotoxins act on postsynaptic membranes, they bind to the nicotinic acetylcholine receptors (nAChR) and thus inhibit them. This toxin provokes a nearly complete and slowly reversible inhibition of both the human adult (alpha-1-beta-1-epsilon-delta (CHRNA1-CHRNB1-CHRND-CHRNE)) and human fetal (alpha-1-beta-1-gamma-delta (CHRNA1-CHRNB1-CHRNG-CHRND)) neuromuscular nAChRs. It also reversibly blocks the neuromuscular alpha-7/CHRNA7 nAChR, the alpha-3-beta-2 (CHRNA3-CHRNB2) nAChR, the chimeric alpha-6 or -3/beta-3 or -2 (CHRNA6/CHRNA3-CHRNB2-CHRNB3) nAChR and with a low potency the alpha-4-beta-2 (CHRNA4-CHRNB2) nAChR. In addition, the toxin also inhibits the alpha-9-alpha-10 (CHRNA9-CHRNA10) nAChR with a high potency (IC(50)=187 nM). This is Alpha-conotoxin RVIIIA from Conus radiatus (Rayed cone).